A 188-amino-acid chain; its full sequence is Elongation factor P (188 aa).

The protein belongs to the elongation factor P family.

The protein resides in the cytoplasm. It functions in the pathway protein biosynthesis; polypeptide chain elongation. Functionally, involved in peptide bond synthesis. Stimulates efficient translation and peptide-bond synthesis on native or reconstituted 70S ribosomes in vitro. Probably functions indirectly by altering the affinity of the ribosome for aminoacyl-tRNA, thus increasing their reactivity as acceptors for peptidyl transferase. This chain is Elongation factor P, found in Acidiphilium cryptum (strain JF-5).